Consider the following 270-residue polypeptide: Glutamate 5-kinase (270 aa).

Lys17 provides a ligand contact to ATP. 3 residues coordinate substrate: Ser57, Asp144, and Asn160. Residues 180–181 (SD) and 222–228 (TGGMTSK) contribute to the ATP site.

The protein belongs to the glutamate 5-kinase family.

Its subcellular location is the cytoplasm. The catalysed reaction is L-glutamate + ATP = L-glutamyl 5-phosphate + ADP. It participates in amino-acid biosynthesis; L-proline biosynthesis; L-glutamate 5-semialdehyde from L-glutamate: step 1/2. Its function is as follows. Catalyzes the transfer of a phosphate group to glutamate to form L-glutamate 5-phosphate. The sequence is that of Glutamate 5-kinase from Lactococcus lactis subsp. lactis (strain IL1403) (Streptococcus lactis).